The chain runs to 596 residues: Arginine--tRNA ligase (596 aa).

Positions alanine 128–histidine 138 match the 'HIGH' region motif.

The protein belongs to the class-I aminoacyl-tRNA synthetase family. Monomer.

Its subcellular location is the cytoplasm. It catalyses the reaction tRNA(Arg) + L-arginine + ATP = L-arginyl-tRNA(Arg) + AMP + diphosphate. This Acinetobacter baumannii (strain SDF) protein is Arginine--tRNA ligase.